Here is a 324-residue protein sequence, read N- to C-terminus: Cysteine-rich repeat secretory protein 9 (324 aa).

The signal sequence occupies residues 1–27 (MARIIITLTIPLFYFFFFSLLSHQTMS). Gnk2-homologous domains are found at residues 29–132 (PDHI…NVSF) and 138–248 (IVPS…TSVL). A disordered region spans residues 251 to 286 (PPPSPSAPPPRSPPPKSSPPSSLPQTPSPPLVFTPP).

Belongs to the cysteine-rich repeat secretory protein family.

It localises to the secreted. This Arabidopsis thaliana (Mouse-ear cress) protein is Cysteine-rich repeat secretory protein 9 (CRRSP9).